A 266-amino-acid chain; its full sequence is Electron transfer flavoprotein subunit beta (266 aa).

Belongs to the ETF beta-subunit/FixA family. Heterodimer of an alpha and a beta subunit. Requires FAD as cofactor. AMP serves as cofactor.

In terms of biological role, the electron transfer flavoprotein serves as a specific electron acceptor for other dehydrogenases. It transfers the electrons to the main respiratory chain via ETF-ubiquinone oxidoreductase (ETF dehydrogenase). This Mycobacterium bovis (strain ATCC BAA-935 / AF2122/97) protein is Electron transfer flavoprotein subunit beta (etfB).